The chain runs to 469 residues: Glutamine synthetase (469 aa).

The GS beta-grasp domain occupies 13–97; that stretch reads NEVKFVDLRF…IRCDILEPAT (85 aa). Residues 105–469 form the GS catalytic domain; sequence PRSIAKRAEE…PLEFELYYSV (365 aa). 2 residues coordinate Mg(2+): Glu130 and Glu132. An ATP-binding site is contributed by Glu208. Mg(2+)-binding residues include Glu213 and Glu221. Residues 265 to 266 and Gly266 each bind L-glutamate; that span reads NG. His270 contacts Mg(2+). Residues 272-274 and Ser274 each bind ATP; that span reads HQS. L-glutamate-binding residues include Arg322, Glu328, and Arg340. Arg340, Arg345, and Lys353 together coordinate ATP. Glu358 contacts Mg(2+). Arg360 is an L-glutamate binding site. At Tyr398 the chain carries O-AMP-tyrosine.

The protein belongs to the glutamine synthetase family. Oligomer of 12 subunits arranged in the form of two hexameric ring. The cofactor is Mg(2+).

It is found in the cytoplasm. The enzyme catalyses L-glutamate + NH4(+) + ATP = L-glutamine + ADP + phosphate + H(+). With respect to regulation, the activity of this enzyme could be controlled by adenylation under conditions of abundant glutamine. Functionally, catalyzes the ATP-dependent biosynthesis of glutamine from glutamate and ammonia. This chain is Glutamine synthetase (glnAv), found in Vibrio cholerae serotype O1 (strain ATCC 39315 / El Tor Inaba N16961).